Here is a 197-residue protein sequence, read N- to C-terminus: Holliday junction branch migration complex subunit RuvA (197 aa).

The domain I stretch occupies residues 1-64; the sequence is MIDSIVGTIQ…LSELECYGFL (64 aa). Residues 65–143 are domain II; sequence TREERELFLK…KEFKVASTSG (79 aa). Residues 144–152 are flexible linker; sequence TEEKTYEKL. Positions 152-197 are domain III; the sequence is LEEISLALLSLGYEIDEINQVLSSEDFSELSLEDGIKLALKKLSKI.

This sequence belongs to the RuvA family. In terms of assembly, homotetramer. Forms an RuvA(8)-RuvB(12)-Holliday junction (HJ) complex. HJ DNA is sandwiched between 2 RuvA tetramers; dsDNA enters through RuvA and exits via RuvB. An RuvB hexamer assembles on each DNA strand where it exits the tetramer. Each RuvB hexamer is contacted by two RuvA subunits (via domain III) on 2 adjacent RuvB subunits; this complex drives branch migration. In the full resolvosome a probable DNA-RuvA(4)-RuvB(12)-RuvC(2) complex forms which resolves the HJ.

Its subcellular location is the cytoplasm. Functionally, the RuvA-RuvB-RuvC complex processes Holliday junction (HJ) DNA during genetic recombination and DNA repair, while the RuvA-RuvB complex plays an important role in the rescue of blocked DNA replication forks via replication fork reversal (RFR). RuvA specifically binds to HJ cruciform DNA, conferring on it an open structure. The RuvB hexamer acts as an ATP-dependent pump, pulling dsDNA into and through the RuvAB complex. HJ branch migration allows RuvC to scan DNA until it finds its consensus sequence, where it cleaves and resolves the cruciform DNA. The protein is Holliday junction branch migration complex subunit RuvA of Caldicellulosiruptor saccharolyticus (strain ATCC 43494 / DSM 8903 / Tp8T 6331).